The sequence spans 271 residues: Tetraspanin-11 (271 aa).

Topologically, residues 1–7 are cytoplasmic; it reads MFRVSNF. Residues 8–28 form a helical membrane-spanning segment; it reads MVGLANTLVMLVGASAIGYSI. The Extracellular portion of the chain corresponds to 29-44; that stretch reads YMFVHQGVTDCESAIR. Residues 45–65 traverse the membrane as a helical segment; the sequence is IPLLTTGLILFLVSLLGVIGS. Topologically, residues 66–76 are cytoplasmic; the sequence is CFKENLAMVSY. A helical membrane pass occupies residues 77–97; the sequence is LIILFGGIVALMIFSIFLFFV. Residues 98–236 are Extracellular-facing; sequence TNKGAGRVVS…LANIREKWRN (139 aa). Asn185 and Asn195 each carry an N-linked (GlcNAc...) asparagine glycan. The helical transmembrane segment at 237–257 threads the bilayer; the sequence is LLVFNICLLILLITVYSCGCC. Over 258–271 the chain is Cytoplasmic; it reads ARRNNRTARKSDSV.

It belongs to the tetraspanin (TM4SF) family.

Its subcellular location is the membrane. In terms of biological role, may be involved in the regulation of cell differentiation. The sequence is that of Tetraspanin-11 (TET11) from Arabidopsis thaliana (Mouse-ear cress).